A 511-amino-acid chain; its full sequence is Cytochrome P450 4B1 (511 aa).

Heme is bound at residue Glu315. The residue at position 436 (Ser436) is a Phosphoserine. Cys453 is a binding site for heme.

The protein belongs to the cytochrome P450 family. Heme serves as cofactor. Detected in the liver and lung (at protein level).

It is found in the endoplasmic reticulum membrane. It localises to the microsome membrane. It carries out the reaction an organic molecule + reduced [NADPH--hemoprotein reductase] + O2 = an alcohol + oxidized [NADPH--hemoprotein reductase] + H2O + H(+). Cytochromes P450 are a group of heme-thiolate monooxygenases. In liver microsomes, this enzyme is involved in an NADPH-dependent electron transport pathway. It oxidizes a variety of structurally unrelated compounds, including steroids, fatty acids, and xenobiotics. The protein is Cytochrome P450 4B1 (CYP4B1) of Homo sapiens (Human).